We begin with the raw amino-acid sequence, 347 residues long: MNHYNRTIGSMLILVYSMLAAFLFIDKVFVNIIYFQGMFYTQIFGIPVFLFLNLIIILLCIIVGSVLAYKINQQNDWIKTQIERSMEGETVGINDQNIEIYSETLDLYHTLVPLNQELHKLRLKTQNLTNENYNINDVKVKKIIEDERQRLARELHDSVSQQLFAASMMLSAIKETKLEPPLDQQIPILEKMVQDSQLEMRALLLHLRPLGLKDKSLGEGIKDLVIDLQKKVPMKVVHEIQDFKVPKGIEDHLFRITQEAISNTLRHSNGTKVTVELFNKDDYLLLRIQDNGKGFNVDEKLEQSYGLKNMRERALEIGATFHIVSLPDSGTRIEVKAPLNKEDSYDD.

The next 2 membrane-spanning stretches (helical) occupy residues 13-33 and 43-63; these read ILVYSMLAAFLFIDKVFVNII and IFGIPVFLFLNLIIILLCIIV. The Histidine kinase domain occupies 150 to 341; it reads RLARELHDSV…RIEVKAPLNK (192 aa). H156 is modified (phosphohistidine).

Autophosphorylated on His-156.

The protein resides in the cell membrane. It catalyses the reaction ATP + protein L-histidine = ADP + protein N-phospho-L-histidine.. Member of the two-component regulatory system PprA/PprB involved in biofilm formation by controlling the expression of many related genes including type IVb pili major subunit flp pilin, adhesin bapA or cupE fimbriae. Also modulates quorum-sensing signal production acting on both negative and positive modulators. Functions as a heme sensor histidine kinase which is autophosphorylated at a histidine residue and transfers its phosphate group to PprB. In Staphylococcus aureus (strain Mu3 / ATCC 700698), this protein is Sensor protein VraS (vraS).